The chain runs to 473 residues: MSMKISEKKFNDRVGDGIQDSFMRGAVSSAQTRLYTNRLKAADELGNWEEWRELGEEIRQHTLENLDYYLMQLSENVSKRGGHVYFAKTKEEAAKYIQDVAKKKQAKKVVKSKSMVTEEISMNHALEEIGCEVLESDLGEYILQVDNDPPSHIIAPALHKNRTQIRDVFKEKLGYENSDDPYEMTKFVRKQLREKFMDAEIGVTGCNFAVANTGSLCLVTNEGNADLVMSIPKTQIAVMGMERMVPTMEELDVLVGLLCRSAVGQKLTSYVTVAGPIQEEEVDGPEEFHLVVVDNGRSQILGSEFRQVLQCIRCAACVNVCPVYRHVGGHSYGSIYSGPIGAVLTPLLGGYDDYKELPYASSLCGACTEACPVKIPLHDLLLKHRQVIVEQEGRAPLAEKLAMKMFSMGASSAALYKMGSKMAPAAMSPFTSGNRVSKGVGPLKNWTDIREFPAPSKERFRDWYKDHKKGGDK.

4Fe-4S ferredoxin-type domains lie at 302–332 and 351–380; these read GSEF…GHSY and YDDY…LHDL. [4Fe-4S] cluster-binding residues include C311, C314, C317, C321, C364, C367, and C371.

The protein belongs to the LutB/YkgF family.

In terms of biological role, is involved in L-lactate degradation and allows cells to grow with lactate as the sole carbon source. Has probably a role as an electron transporter during oxidation of L-lactate. The sequence is that of Lactate utilization protein B from Bacillus anthracis (strain A0248).